Consider the following 748-residue polypeptide: Semaphorin-3B (748 aa).

A signal peptide spans 1–25; the sequence is MGRAEAAAMIPGLALLWVAGLGDTA. The Sema domain maps to 30 to 512; that stretch reads RLRLSFQELQ…SRSAVAQIAL (483 aa). An N-linked (GlcNAc...) asparagine glycan is attached at Asn82. Cys102 and Cys113 form a disulfide bridge. N-linked (GlcNAc...) asparagine glycosylation occurs at Asn124. Disulfide bonds link Cys131–Cys140, Cys268–Cys379, Cys292–Cys339, Cys515–Cys533, and Cys643–Cys709. One can recognise an Ig-like C2-type domain in the interval 561 to 659; the sequence is PSTLCSGDSS…FSQPLRRLVL (99 aa). A disordered region spans residues 708 to 748; it reads MCRPQPGHHSVAADSRRKGRNRRMHVSELRAERGPRSAAHW. The segment covering 732-742 has biased composition (basic and acidic residues); it reads HVSELRAERGP.

The protein belongs to the semaphorin family.

The protein localises to the secreted. Its function is as follows. Inhibits axonal extension by providing local signals to specify territories inaccessible for growing axons. This is Semaphorin-3B (Sema3b) from Mus musculus (Mouse).